A 572-amino-acid chain; its full sequence is MECLYYFLGFLLLAARLPLDAAKRFHDVLGNERPSAYMREHNQLNGWSSDENDWNEKLYPVWKRGDMRWKNSWKGGRVQAVLTSDSPALVGSNITFAVNLIFPRCQKEDANGNIVYEKNCRNEAGLSADPYVYNWTAWSEDSDGENGTGQSHHNVFPDGKPFPHHPGWRRWNFIYVFHTLGQYFQKLGRCSVRVSVNTANVTLGPQLMEVTVYRRHGRAYVPIAQVKDVYVVTDQIPVFVTMFQKNDRNSSDETFLKDLPIMFDVLIHDPSHFLNYSTINYKWSFGDNTGLFVSTNHTVNHTYVLNGTFSLNLTVKAAAPGPCPPPPPPPRPSKPTPSLATTLKSYDSNTPGPAGDNPLELSRIPDENCQINRYGHFQATITIVEGILEVNIIQMTDVLMPVPWPESSLIDFVVTCQGSIPTEVCTIISDPTCEITQNTVCSPVDVDEMCLLTVRRTFNGSGTYCVNLTLGDDTSLALTSTLISVPDRDPASPLRMANSALISVGCLAIFVTVISLLVYKKHKEYNPIENSPGNVVRSKGLSVFLNRAKAVFFPGNQEKDPLLKNQEFKGVS.

An N-terminal signal peptide occupies residues Met1–Ala22. Over Lys23–Asn498 the chain is Extracellular. The short motif at Arg64 to Asp66 is the Cell attachment site element. N-linked (GlcNAc...) asparagine glycosylation is found at Asn93, Asn134, Asn146, Asn200, Asn249, Asn275, Asn296, Asn300, Asn306, and Asn312. Positions Val240–Pro327 constitute a PKD domain. Residues Pro320–Ser362 form a disordered region. The span at Gly321–Pro335 shows a compositional bias: pro residues. A compositionally biased stretch (polar residues) spans Ser338–Pro351. N-linked (GlcNAc...) asparagine glycans are attached at residues Asn459 and Asn467. The chain crosses the membrane as a helical span at residues Ser499 to Tyr519. At Lys520–Ser572 the chain is on the cytoplasmic side. Phosphoserine is present on Ser542.

Belongs to the PMEL/NMB family. Widely expressed, but very low expression, if any, in the brain. Expressed in the epidermis with higher levels in melanocytes compared with keratinocytes and Langerhans cells (at protein level). Expressed in peripheral blood, but not bone marrow mononuclear cells. Expressed in tissue macrophages, including liver Kuppfer cells and lung alveolar macrophages, in podocytes and in some cells of the ciliary body of the eye (at protein level). May be overexpressed in various cancers, including melanoma and glioblastoma multiforme.

The protein localises to the cell membrane. The protein resides in the melanosome membrane. It localises to the early endosome membrane. In terms of biological role, could be a melanogenic enzyme. The chain is Transmembrane glycoprotein NMB (GPNMB) from Homo sapiens (Human).